Here is a 437-residue protein sequence, read N- to C-terminus: Ribosomal protein uS12 methylthiotransferase RimO (437 aa).

An MTTase N-terminal domain is found at 4-114; the sequence is PRVSFVSLGC…VMNAVHEVAP (111 aa). Residues cysteine 13, cysteine 49, cysteine 78, cysteine 145, cysteine 149, and cysteine 152 each coordinate [4Fe-4S] cluster. The 239-residue stretch at 131-369 folds into the Radical SAM core domain; the sequence is LTPRHYAYLK…MAKQQQISTN (239 aa). In terms of domain architecture, TRAM spans 372–437; it reads KKKVGKRLPV…DAYDLHGTAV (66 aa).

It belongs to the methylthiotransferase family. RimO subfamily. It depends on [4Fe-4S] cluster as a cofactor.

The protein localises to the cytoplasm. It carries out the reaction L-aspartate(89)-[ribosomal protein uS12]-hydrogen + (sulfur carrier)-SH + AH2 + 2 S-adenosyl-L-methionine = 3-methylsulfanyl-L-aspartate(89)-[ribosomal protein uS12]-hydrogen + (sulfur carrier)-H + 5'-deoxyadenosine + L-methionine + A + S-adenosyl-L-homocysteine + 2 H(+). Catalyzes the methylthiolation of an aspartic acid residue of ribosomal protein uS12. The chain is Ribosomal protein uS12 methylthiotransferase RimO from Brucella abortus (strain S19).